The chain runs to 620 residues: Cilia- and flagella-associated protein 52 (620 aa).

11 WD repeats span residues 62-106 (GHGN…LIAR), 109-150 (LHKG…AICG), 156-195 (LNVG…RKIW), 288-327 (QLQG…ETLI), 330-369 (CHFE…ELLR), 372-411 (VPNM…LMYT), 415-454 (AHRI…QKLE), 459-498 (EHKS…RNQM), 500-541 (LANT…RELE), 543-582 (SLSG…VTHV), and 585-620 (GHSG…PFAS).

Belongs to the CFAP52 family. Microtubule inner protein component of sperm flagellar doublet microtubules. Interacts with BRCA2. Interacts with the CCT chaperonin complex. Interacts with HSP70. Interacts with AK8. Interacts with CFAP45. Interacts with DNAI1. Interacts with IQDC.

It is found in the cytoplasm. The protein localises to the cytoskeleton. Its subcellular location is the cilium axoneme. It localises to the flagellum axoneme. Functionally, microtubule inner protein (MIP) part of the dynein-decorated doublet microtubules (DMTs) in cilia axoneme. Important for proper ciliary and flagellar beating. May act in cooperation with CFAP45 and axonemal dynein subunit DNAH11. May play a role in cell growth and/or survival. The protein is Cilia- and flagella-associated protein 52 of Mus musculus (Mouse).